The following is a 190-amino-acid chain: Peptide deformylase (190 aa).

Residues C106 and H148 each contribute to the Fe cation site. The active site involves E149. Fe cation is bound at residue H152.

Belongs to the polypeptide deformylase family. It depends on Fe(2+) as a cofactor.

The catalysed reaction is N-terminal N-formyl-L-methionyl-[peptide] + H2O = N-terminal L-methionyl-[peptide] + formate. Removes the formyl group from the N-terminal Met of newly synthesized proteins. Requires at least a dipeptide for an efficient rate of reaction. N-terminal L-methionine is a prerequisite for activity but the enzyme has broad specificity at other positions. This chain is Peptide deformylase, found in Methylacidiphilum infernorum (isolate V4) (Methylokorus infernorum (strain V4)).